The sequence spans 256 residues: 5'-nucleotidase SurE (256 aa).

The a divalent metal cation site is built by Asp8, Asp9, Ser42, and Asn94.

Belongs to the SurE nucleotidase family. It depends on a divalent metal cation as a cofactor.

It is found in the cytoplasm. It carries out the reaction a ribonucleoside 5'-phosphate + H2O = a ribonucleoside + phosphate. In terms of biological role, nucleotidase that shows phosphatase activity on nucleoside 5'-monophosphates. This chain is 5'-nucleotidase SurE, found in Ehrlichia chaffeensis (strain ATCC CRL-10679 / Arkansas).